The sequence spans 713 residues: MSLFNKIVKEFQWGQHKVRLETGEIARQASGAVIVDIEDTVVLATVVGAKSAKPGQDFFPLTVDYIEKTYSAGKIPGGFFRREGRPSEHETLTSRLIDRPLRPLFPEGFYNEVQVVIHVLSVNPEIPADIPALIGASAALAVSGLPFNGPVGAARVAYVNNEYVLNPTREQIKASRLDLVVAGTERAVLMVESEADQLPEDVMLGAVVFGHEQMQTAIDAIHELVREGGKPEWDWQPAPKDEALNARVTELAQPELLAAYQIRDKQARSTKLKEVYAATSAKLEEEAVAAGTVAADKATVGNILFDLEAKIVRGQILNGEPRIDGRDTRTVRPIEIRTGVLPRTHGSALFTRGETQALVVATLGTKGDEQIIDALEGEYRERFMLHYNMPPFATGETGRVGSPKRREIGHGRLAKRALVACLPSADEFGYSIRVVSEITESNGSSSMASVCGGCLALMDAGVPMKAHVAGIAMGLILEGNKFAVLTDILGDEDHLGDMDFKVAGTADGVTALQMDIKIQGITKEIMQVALAQAKEGRMHILGKMKDAVAGANTQLSEFAPRMITIKINPEKIRDVIGKGGSVIRALTEETGTTIDISDDGVVTIASTNSEGMAEAKKRIENITAEIEVGHVYEGTVLKLLDFGAIVNLLPGKDGLLHISEIVNERVKDINDYLKEGQQVKVKVIQTDEKGRVRLSAKALLNEAAAQADTPPQQ.

Asp493 and Asp499 together coordinate Mg(2+). The 60-residue stretch at 560–619 (PRMITIKINPEKIRDVIGKGGSVIRALTEETGTTIDISDDGVVTIASTNSEGMAEAKKRI) folds into the KH domain. Residues 629–697 (GHVYEGTVLK…EKGRVRLSAK (69 aa)) enclose the S1 motif domain.

Belongs to the polyribonucleotide nucleotidyltransferase family. Mg(2+) is required as a cofactor.

It is found in the cytoplasm. The enzyme catalyses RNA(n+1) + phosphate = RNA(n) + a ribonucleoside 5'-diphosphate. Involved in mRNA degradation. Catalyzes the phosphorolysis of single-stranded polyribonucleotides processively in the 3'- to 5'-direction. The protein is Polyribonucleotide nucleotidyltransferase of Burkholderia pseudomallei (strain 1106a).